The chain runs to 305 residues: UDP-3-O-acyl-N-acetylglucosamine deacetylase (305 aa).

Residues H77, H234, and D238 each contribute to the Zn(2+) site. H261 acts as the Proton donor in catalysis.

Belongs to the LpxC family. Zn(2+) is required as a cofactor.

It carries out the reaction a UDP-3-O-[(3R)-3-hydroxyacyl]-N-acetyl-alpha-D-glucosamine + H2O = a UDP-3-O-[(3R)-3-hydroxyacyl]-alpha-D-glucosamine + acetate. It participates in glycolipid biosynthesis; lipid IV(A) biosynthesis; lipid IV(A) from (3R)-3-hydroxytetradecanoyl-[acyl-carrier-protein] and UDP-N-acetyl-alpha-D-glucosamine: step 2/6. Functionally, catalyzes the hydrolysis of UDP-3-O-myristoyl-N-acetylglucosamine to form UDP-3-O-myristoylglucosamine and acetate, the committed step in lipid A biosynthesis. The polypeptide is UDP-3-O-acyl-N-acetylglucosamine deacetylase (Oleidesulfovibrio alaskensis (strain ATCC BAA-1058 / DSM 17464 / G20) (Desulfovibrio alaskensis)).